Consider the following 437-residue polypeptide: Proline--tRNA ligase (437 aa).

The protein belongs to the class-II aminoacyl-tRNA synthetase family. ProS type 2 subfamily. As to quaternary structure, homodimer.

It localises to the cytoplasm. It catalyses the reaction tRNA(Pro) + L-proline + ATP = L-prolyl-tRNA(Pro) + AMP + diphosphate. Functionally, catalyzes the attachment of proline to tRNA(Pro) in a two-step reaction: proline is first activated by ATP to form Pro-AMP and then transferred to the acceptor end of tRNA(Pro). The protein is Proline--tRNA ligase of Rhizorhabdus wittichii (strain DSM 6014 / CCUG 31198 / JCM 15750 / NBRC 105917 / EY 4224 / RW1) (Sphingomonas wittichii).